The chain runs to 398 residues: Flavin-containing monooxygenase ustF1 (398 aa).

The signal sequence occupies residues 1-22; the sequence is MTVSQVRRVAVIGAGISGVVST. 13–18 is an FAD binding site; it reads GAGISG. Residues N53, N57, N119, and N126 are each glycosylated (N-linked (GlcNAc...) asparagine). An NADP(+)-binding site is contributed by 194 to 199; it reads GGGVSS. N-linked (GlcNAc...) asparagine glycans are attached at residues N236, N243, and N271.

It belongs to the FMO family.

It functions in the pathway mycotoxin biosynthesis. In terms of biological role, flavin-containing monooxygenase; part of the gene cluster that mediates the biosynthesis of the secondary metabolite ustiloxin B, an antimitotic tetrapeptide. First, ustA is processed by the subtilisin-like endoprotease Kex2 that is outside the ustiloxin B gene cluster, at the C-terminal side of Arg-Lys, after transfer to Golgi apparatus through the endoplasmic reticulum (ER). Cleavage by KEX2 generates 16 peptides YAIG-I to YAIG-XVI. To process the precursor peptide further, at least two peptidases are necessary to cleave the N-terminal and C-terminal sides of the Tyr-Ala-Ile-Gly core peptide which serves as backbone for the synthesis of ustiloxin B, through cyclization and modification of the tyrosine with a non-protein coding amino acid, norvaline. One of the two peptidases must be the serine peptidase ustP; and the other pepdidase is probably ustH. Macrocyclization of the core peptide derived from ustA requires the tyrosinase ustQ, as well as the homologous oxidases ustYa and ustYb, and leads to the production of the first cyclization product N-desmethylustiloxin F. For the formation of N-desmethylustiloxin F, three oxidation steps are required, hydroxylation at the benzylic position, hydroxylation at either the aromatic ring of Tyr or beta-position of Ile, and oxidative cyclization. UstQ may catalyze the oxidation of a phenol moiety, whereas the ustYa and ustYb are most likely responsible for the remaining two-step oxidations. N-desmethylustiloxin F is then methylated by ustM to yield ustiloxin F which in turn substrate of the cytochrome P450 monooxygenase ustC which catalyzes the formation of S-deoxyustiloxin H. The flavoprotein monooxygenases ustF1 and ustF2 then participate in the modification of the side chain of S-deoxyustiloxin H, leading to the synthesis of an oxime intermediate, via ustiloxin H. Finally, carboxylative dehydration performed by the cysteine desulfurase-like protein ustD yields ustiloxin B. In Aspergillus flavus (strain ATCC 200026 / FGSC A1120 / IAM 13836 / NRRL 3357 / JCM 12722 / SRRC 167), this protein is Flavin-containing monooxygenase ustF1.